A 396-amino-acid chain; its full sequence is MIISAASDYRAAAQRILPPFLFHYIDGGAYAEYTLRRNVEDLSQVALRQRVLKNMSDLSLETTLFNEKLSMPVALAPVGLCGMYARRGEVQAAGAADAHGIPFTLSTVSVCPIEEVAPTIKRPMWFQLYVLRDRGFMRNALERAKAAGCSTLVFTVDMPTPGARYRDAHSGMSGPNAAMRRYWQAVTHPQWAWDVGLNGRPHDLGNISAYLGKPTGLEDYIGWLANNFDPSISWKDLEWIRDFWDGPMVIKGILDPEDARDAVRFGADGIVVSNHGGRQLDGVLSSARALPAIADAVKGDIAILADSGIRNGLDVVRMIALGADTVLLGRAYLYALATAGKAGVANLLNLIEKEMKVAMTLTGAKSISEISQDSLVQELDKALPAALAPLAKGNAA.

The FMN hydroxy acid dehydrogenase domain maps to 1–380; it reads MIISAASDYR…SQDSLVQELD (380 aa). Residue Tyr24 coordinates substrate. The FMN site is built by Ser106 and Gln127. Substrate is bound at residue Tyr129. FMN is bound at residue Thr155. Arg164 serves as a coordination point for substrate. Lys251 provides a ligand contact to FMN. Residue His275 is the Proton acceptor of the active site. A substrate-binding site is contributed by Arg278. 306–330 provides a ligand contact to FMN; that stretch reads DSGIRNGLDVVRMIALGADTVLLGR.

Belongs to the FMN-dependent alpha-hydroxy acid dehydrogenase family. Requires FMN as cofactor.

It localises to the cell inner membrane. The enzyme catalyses (S)-lactate + A = pyruvate + AH2. Its function is as follows. Catalyzes the conversion of L-lactate to pyruvate. Is coupled to the respiratory chain. This Escherichia fergusonii (strain ATCC 35469 / DSM 13698 / CCUG 18766 / IAM 14443 / JCM 21226 / LMG 7866 / NBRC 102419 / NCTC 12128 / CDC 0568-73) protein is L-lactate dehydrogenase.